A 416-amino-acid chain; its full sequence is Type II methyltransferase M.PspPI (416 aa).

The SAM-dependent MTase C5-type domain maps to 77–410 (YSLVELFAGA…KAIIRMLNAA (334 aa)). Residue Cys-149 is part of the active site.

It belongs to the class I-like SAM-binding methyltransferase superfamily. C5-methyltransferase family.

The enzyme catalyses a 2'-deoxycytidine in DNA + S-adenosyl-L-methionine = a 5-methyl-2'-deoxycytidine in DNA + S-adenosyl-L-homocysteine + H(+). A methylase, recognizes the double-stranded sequence 5'-GGNCC-3', methylates C-4 on both strands, and protects the DNA from cleavage by the PspPI endonuclease. This Psychrobacter sp. (strain TA137) protein is Type II methyltransferase M.PspPI.